Reading from the N-terminus, the 741-residue chain is uncharacterized protein (741 aa).

An N-terminal signal peptide occupies residues 1–18 (MKTISILAFLVLARLIEA). Disordered stretches follow at residues 142–300 (PKVE…GNVD), 423–528 (EEDE…SEQG), and 646–681 (ETVA…VEDD). Residues 147–165 (EEEEEEYDGEEDDDDESLT) show a composition bias toward acidic residues. 2 stretches are compositionally biased toward low complexity: residues 183-197 (VEPS…STTE) and 205-266 (STTV…SSTT). Residues Asn-232 and Asn-241 are each glycosylated (N-linked (GlcNAc...) asparagine). The segment covering 423–432 (EEDEIDETET) has biased composition (acidic residues). Residues 433–451 (TESTKTTETTKTTGPAETT) are compositionally biased toward low complexity. Residues Asn-461 and Asn-511 are each glycosylated (N-linked (GlcNAc...) asparagine). The span at 500–511 (PIDESTESEEPN) shows a compositional bias: acidic residues. Residues 512-528 (ESVTVTGDTTTDTSEQG) are compositionally biased toward low complexity. Positions 646 to 656 (ETVAPDTNSPD) are enriched in polar residues. Over residues 657–671 (ADQEQPDSVEPDNET) the composition is skewed to acidic residues. N-linked (GlcNAc...) asparagine glycosylation occurs at Asn-669. Asn-719 carries the GPI-anchor amidated asparagine lipid modification. Positions 720-741 (AANLAGSISLSSGVLLLILMLI) are cleaved as a propeptide — removed in mature form.

The protein resides in the cell membrane. This is an uncharacterized protein from Candida albicans (strain SC5314 / ATCC MYA-2876) (Yeast).